The chain runs to 362 residues: Putative membrane-bound acyltransferase YfiQ (362 aa).

A run of 10 helical transmembrane segments spans residues 11 to 31 (CISC…MLQA), 44 to 64 (FRTL…FLLA), 82 to 102 (VIFV…TSAM), 119 to 139 (VFLG…YMLH), 153 to 173 (WVLS…SAAS), 181 to 201 (GGAF…FCLA), 220 to 240 (WVVY…SYVG), 252 to 267 (IMLY…FHLF), 283 to 303 (YSFS…VLLL), and 308 to 328 (IPAV…PIMT).

This sequence belongs to the acyltransferase 3 family.

Its subcellular location is the cell membrane. The sequence is that of Putative membrane-bound acyltransferase YfiQ (yfiQ) from Bacillus subtilis (strain 168).